A 438-amino-acid chain; its full sequence is uncharacterized protein (438 aa).

12 helical membrane-spanning segments follow: residues 22-42 (VSPIVALTITPIVFALIGGFG), 59-79 (SAALLLFAILFFGILIDAGLF), 89-109 (IVKGDPVKIAIGSAVLAMLIA), 137-157 (MVMATLAMLSLSIVSGMTPWG), 174-194 (FFVPLLPTMLGGIACVIFLAF), 237-257 (LIYLNLFLVISIMVFIVLGTK), 258-278 (HPSVLFLIGFVLALTINYPNV), 292-312 (AITVVLLVFSAGVFAGILSGT), 330-350 (MGGFFPVIVALTSIPFTFVLS), 356-376 (FGMVPIFAEAASAYGIEPVEI), 380-400 (SIMGQPVHLMSPLVASTVLLV), and 418-438 (AVITSLVITLLAIITGAITIL).

Belongs to the CitM (TC 2.A.11) transporter family.

Its subcellular location is the cell membrane. Transports the free citrate anion. This is an uncharacterized protein from Bacillus subtilis (strain 168).